A 227-amino-acid chain; its full sequence is MFKRMAEFGPDSGGRVKGVTIVKPIVYGNVARYFGKKREEDGHTHQWTVYVKPYRNEDMSAYVKKIQFKLHESYGNPLRVVTKPPYEITETGWGEFEIIIKIFFIDPNERPVTLYHLLKLFQSDTNAMLGKKTVVSEFYDEMIFQDPTAMMQQLLTTSRQLTLGAYKHETEFAELEVKTREKLEAAKKKTSFEIAELKERLKASRETINCLKNEIRKLEEDDQTKDI.

The 144-residue stretch at 15 to 158 (RVKGVTIVKP…AMMQQLLTTS (144 aa)) folds into the YEATS domain. A Glycyl lysine isopeptide (Lys-Gly) (interchain with G-Cter in SUMO2) cross-link involves residue K37. A diacetylated histone H3 binding region spans residues 93-97 (WGEFE). The segment at 163–227 (LGAYKHETEF…LEEDDQTKDI (65 aa)) is interaction with MLLT10. Positions 168 to 227 (HETEFAELEVKTREKLEAAKKKTSFEIAELKERLKASRETINCLKNEIRKLEEDDQTKDI) are interaction with TACC1. Residues 178-226 (KTREKLEAAKKKTSFEIAELKERLKASRETINCLKNEIRKLEEDDQTKD) adopt a coiled-coil conformation.

As to quaternary structure, component of numerous complexes with chromatin remodeling and histone acetyltransferase activity. Component of the NuA4 histone acetyltransferase complex which contains the catalytic subunit KAT5/TIP60 and the subunits EP400, TRRAP/PAF400, BRD8/SMAP, EPC1, DMAP1/DNMAP1, RUVBL1/TIP49, RUVBL2, ING3, actin, ACTL6A/BAF53A, MORF4L1/MRG15, MORF4L2/MRGX, MRGBP, YEATS4/GAS41, VPS72/YL1 and MEAF6. The NuA4 complex interacts with MYC and the adenovirus E1A protein. Component of a NuA4-related complex which contains EP400, TRRAP/PAF400, SRCAP, BRD8/SMAP, EPC1, DMAP1/DNMAP1, RUVBL1/TIP49, RUVBL2, actin, ACTL6A/BAF53A, VPS72 and YEATS4/GAS41. Interacts with MLLT10/AF10. Also interacts with the SWI/SNF component SMARCB1/BAF47, TACC1 and TACC2, and the nuclear matrix protein NUMA1.

The protein localises to the nucleus. Chromatin reader component of the NuA4 histone acetyltransferase (HAT) complex, a complex involved in transcriptional activation of select genes principally by acetylation of nucleosomal histones H4 and H2A. Specifically recognizes and binds acylated histone H3, with a preference for histone H3 diacetylated at 'Lys-18' and 'Lys-27' (H3K18ac and H3K27ac) or histone H3 diacetylated at 'Lys-14' and 'Lys-27' (H3K14ac and H3K27ac). Also able to recognize and bind crotonylated histone H3. May also recognize and bind histone H3 succinylated at 'Lys-122' (H3K122succ); additional evidences are however required to confirm this result in vivo. Plays a key role in histone variant H2AZ1/H2A.Z deposition into specific chromatin regions: recognizes and binds H3K14ac and H3K27ac on the promoters of actively transcribed genes and recruits NuA4-related complex to deposit H2AZ1/H2A.Z. H2AZ1/H2A.Z deposition is required for maintenance of embryonic stem cell. This Mus musculus (Mouse) protein is YEATS domain-containing protein 4.